Reading from the N-terminus, the 301-residue chain is Chitosanase (301 aa).

The first 42 residues, 1–42, serve as a signal peptide directing secretion; the sequence is MHMSNARPSKSRTKFLLAFLCFTLMASLFGATALFGPSKAAA. Residue E79 is the Proton donor of the active site. A disulfide bond links C92 and C166. D97 acts as the Nucleophile in catalysis.

Belongs to the glycosyl hydrolase 46 family.

It is found in the secreted. The catalysed reaction is Endohydrolysis of beta-(1-&gt;4)-linkages between D-glucosamine residues in a partly acetylated chitosan.. Aids in the defense against invading fungal pathogens by degrading their cell wall chitosan. The protein is Chitosanase (csn) of Niallia circulans (Bacillus circulans).